Reading from the N-terminus, the 301-residue chain is Probable alpha-L-glutamate ligase (301 aa).

The region spanning 104–287 (TQLLARKGIG…IAGTIYAFLE (184 aa)) is the ATP-grasp domain. ATP contacts are provided by residues Lys-141, 178 to 179 (EY), Asp-187, and 211 to 213 (RSN). Mg(2+)-binding residues include Asp-248, Glu-260, and Asn-262. The Mn(2+) site is built by Asp-248, Glu-260, and Asn-262.

This sequence belongs to the RimK family. The cofactor is Mg(2+). Requires Mn(2+) as cofactor.

This is Probable alpha-L-glutamate ligase from Alkalilimnicola ehrlichii (strain ATCC BAA-1101 / DSM 17681 / MLHE-1).